The chain runs to 156 residues: Small ribosomal subunit protein uS7 (156 aa).

This sequence belongs to the universal ribosomal protein uS7 family. In terms of assembly, part of the 30S ribosomal subunit. Contacts proteins S9 and S11.

One of the primary rRNA binding proteins, it binds directly to 16S rRNA where it nucleates assembly of the head domain of the 30S subunit. Is located at the subunit interface close to the decoding center, probably blocks exit of the E-site tRNA. This chain is Small ribosomal subunit protein uS7, found in Levilactobacillus brevis (strain ATCC 367 / BCRC 12310 / CIP 105137 / JCM 1170 / LMG 11437 / NCIMB 947 / NCTC 947) (Lactobacillus brevis).